The following is a 491-amino-acid chain: Cytochrome P450 2B9 (491 aa).

Position 128 is a phosphoserine; by PKA (Ser-128). Cys-436 serves as a coordination point for heme.

The protein belongs to the cytochrome P450 family. Heme is required as a cofactor.

The protein localises to the endoplasmic reticulum membrane. It is found in the microsome membrane. The catalysed reaction is an organic molecule + reduced [NADPH--hemoprotein reductase] + O2 = an alcohol + oxidized [NADPH--hemoprotein reductase] + H2O + H(+). Functionally, cytochromes P450 are a group of heme-thiolate monooxygenases. In liver microsomes, this enzyme is involved in an NADPH-dependent electron transport pathway. It oxidizes a variety of structurally unrelated compounds, including steroids, fatty acids, and xenobiotics. The chain is Cytochrome P450 2B9 (Cyp2b9) from Mus musculus (Mouse).